We begin with the raw amino-acid sequence, 741 residues long: Translation initiation factor IF-2 (741 aa).

Basic and acidic residues-rich tracts occupy residues 48–74 (HQYR…DKPK) and 107–123 (KGKE…EKKA). A disordered region spans residues 48–158 (HQYRPKAEKK…PQPAKKEKEL (111 aa)). Over residues 127 to 139 (AKKKGKGPAKGKK) the composition is skewed to basic residues. A compositionally biased stretch (low complexity) spans 140–151 (QAAPAAKQVPQP). The tr-type G domain occupies 242 to 411 (ERPPVVTIMG…LLVSEMEELK (170 aa)). The tract at residues 251–258 (GHVDHGKT) is G1. Position 251–258 (251–258 (GHVDHGKT)) interacts with GTP. Residues 276 to 280 (GITQH) form a G2 region. Residues 297 to 300 (DTPG) form a G3 region. GTP contacts are provided by residues 297–301 (DTPGH) and 351–354 (NKMD). The segment at 351-354 (NKMD) is G4. Positions 387–389 (SAK) are G5.

It belongs to the TRAFAC class translation factor GTPase superfamily. Classic translation factor GTPase family. IF-2 subfamily.

The protein resides in the cytoplasm. In terms of biological role, one of the essential components for the initiation of protein synthesis. Protects formylmethionyl-tRNA from spontaneous hydrolysis and promotes its binding to the 30S ribosomal subunits. Also involved in the hydrolysis of GTP during the formation of the 70S ribosomal complex. This Geobacillus stearothermophilus (Bacillus stearothermophilus) protein is Translation initiation factor IF-2 (infB).